Reading from the N-terminus, the 344-residue chain is Uroporphyrinogen decarboxylase (344 aa).

Residues 27-31 (RQAGR), Phe46, Asp77, Tyr153, Thr208, and His324 each bind substrate.

The protein belongs to the uroporphyrinogen decarboxylase family. Homodimer.

It is found in the cytoplasm. The enzyme catalyses uroporphyrinogen III + 4 H(+) = coproporphyrinogen III + 4 CO2. Its pathway is porphyrin-containing compound metabolism; protoporphyrin-IX biosynthesis; coproporphyrinogen-III from 5-aminolevulinate: step 4/4. Its function is as follows. Catalyzes the decarboxylation of four acetate groups of uroporphyrinogen-III to yield coproporphyrinogen-III. This Bradyrhizobium diazoefficiens (strain JCM 10833 / BCRC 13528 / IAM 13628 / NBRC 14792 / USDA 110) protein is Uroporphyrinogen decarboxylase.